The sequence spans 318 residues: L-lactate dehydrogenase (318 aa).

NAD(+)-binding positions include Val20, Asp41, Lys46, Tyr71, and 85 to 86; that span reads GA. Residues Gln88, Arg94, and 126–129 each bind substrate; that span reads NPVD. Residues 124-126 and Ser149 contribute to the NAD(+) site; that span reads ATN. 154 to 157 contributes to the substrate binding site; the sequence is DTAR. Beta-D-fructose 1,6-bisphosphate is bound by residues Arg159 and His174. His181 acts as the Proton acceptor in catalysis. Position 226 is a phosphotyrosine (Tyr226). Position 235 (Thr235) interacts with substrate.

This sequence belongs to the LDH/MDH superfamily. LDH family. As to quaternary structure, homotetramer.

It is found in the cytoplasm. The enzyme catalyses (S)-lactate + NAD(+) = pyruvate + NADH + H(+). It functions in the pathway fermentation; pyruvate fermentation to lactate; (S)-lactate from pyruvate: step 1/1. With respect to regulation, allosterically activated by fructose 1,6-bisphosphate (FBP). In terms of biological role, catalyzes the conversion of lactate to pyruvate. The chain is L-lactate dehydrogenase from Priestia megaterium (Bacillus megaterium).